Reading from the N-terminus, the 245-residue chain is Uridylate kinase (245 aa).

16–19 (KLSG) is an ATP binding site. Residue glycine 58 participates in UMP binding. Residues glycine 59 and arginine 63 each contribute to the ATP site. UMP-binding positions include aspartate 78 and 139–146 (TGNPFFTT). The ATP site is built by threonine 166, tyrosine 172, and aspartate 175.

This sequence belongs to the UMP kinase family. Homohexamer.

It localises to the cytoplasm. It catalyses the reaction UMP + ATP = UDP + ADP. The protein operates within pyrimidine metabolism; CTP biosynthesis via de novo pathway; UDP from UMP (UMPK route): step 1/1. With respect to regulation, inhibited by UTP. Catalyzes the reversible phosphorylation of UMP to UDP. This Idiomarina loihiensis (strain ATCC BAA-735 / DSM 15497 / L2-TR) protein is Uridylate kinase.